A 277-amino-acid polypeptide reads, in one-letter code: UBX domain-containing protein 8 (277 aa).

Met1 is a topological domain (cytoplasmic). A helical transmembrane segment spans residues 2-22 (ASRGVVGLFLLSALPLLCLEL). At 23–33 (RRGIPSLGIKD) the chain is on the lumenal side. A helical membrane pass occupies residues 34–54 (LILLSGRIFLLLALLTLVISV). Topologically, residues 55 to 277 (TTSWFNSLKP…NVEEKEQSSQ (223 aa)) are cytoplasmic. A disordered region spans residues 64–89 (PSQGHLKEGEKENEKRRRLVRERQQE). The span at 68–89 (HLKEGEKENEKRRRLVRERQQE) shows a compositional bias: basic and acidic residues. One can recognise a UBX domain in the interval 193–269 (TAEEVVTVAL…GITVDTVLNV (77 aa)).

As to quaternary structure, interacts with SYVN1 and VCP. As to expression, highly expressed in gonads. In testis, expressed in post-meiotic round spermatids, while in ovaries it is expressed in granulosa cells.

The protein localises to the endoplasmic reticulum membrane. Involved in endoplasmic reticulum-associated degradation (ERAD) for misfolded lumenal proteins, possibly by tethering VCP to the endoplasmic reticulum membrane. May play a role in reproduction. The polypeptide is UBX domain-containing protein 8 (Ubxn8) (Mus musculus (Mouse)).